Reading from the N-terminus, the 357-residue chain is NAD-dependent protein deacetylase HST2 (357 aa).

Position 2 is an N-acetylserine (S2). The Deacetylase sirtuin-type domain maps to 5 to 284 (TASTEMSVRK…EQLVEELGWQ (280 aa)). Residues 32–52 (GAGI…TGLY) and 115–118 (QNID) contribute to the NAD(+) site. H135 functions as the Proton acceptor in the catalytic mechanism. Zn(2+)-binding residues include C143, C146, C170, and C173. NAD(+)-binding positions include 223 to 225 (GTS), 248 to 250 (NLE), and S270. Positions 317–329 (LDQSEHESADKKD) are enriched in basic and acidic residues. Residues 317-357 (LDQSEHESADKKDKKLQRLNGHDSDEDGASNSSSSQKAAKE) form a disordered region. S340 is subject to Phosphoserine.

Belongs to the sirtuin family. Class I subfamily. As to quaternary structure, homotrimer. Monomer. Homotrimeric in its unliganded state. Undergoes a trimer-monomer transition upon acetyl-lysine substrate binding. Zn(2+) serves as cofactor.

Its subcellular location is the cytoplasm. The protein localises to the nucleus. It carries out the reaction N(6)-acetyl-L-lysyl-[protein] + NAD(+) + H2O = 2''-O-acetyl-ADP-D-ribose + nicotinamide + L-lysyl-[protein]. Inhibited by ADP-ribose and nicotinamide. NAD-dependent histone deacetylase that is involved in nuclear silencing events. Derepresses subtelomeric silencing and increases repression in nucleolar (rDNA) silencing. Its function is negatively regulated by active nuclear export. This chain is NAD-dependent protein deacetylase HST2 (HST2), found in Saccharomyces cerevisiae (strain ATCC 204508 / S288c) (Baker's yeast).